Reading from the N-terminus, the 152-residue chain is Transcriptional repressor NrdR (152 aa).

The segment at 3-34 (CPKCGSLNDKVVDTRQSKDGTVIRRRRECLDC) is a zinc-finger region. The region spanning 49-139 (IVVKKKNGTT…VYNEFQDIKD (91 aa)) is the ATP-cone domain.

This sequence belongs to the NrdR family. Requires Zn(2+) as cofactor.

Negatively regulates transcription of bacterial ribonucleotide reductase nrd genes and operons by binding to NrdR-boxes. This is Transcriptional repressor NrdR from Persephonella marina (strain DSM 14350 / EX-H1).